Here is a 49-residue protein sequence, read N- to C-terminus: Large ribosomal subunit protein bL33A (49 aa).

This sequence belongs to the bacterial ribosomal protein bL33 family.

This is Large ribosomal subunit protein bL33A from Limosilactobacillus reuteri subsp. reuteri (strain JCM 1112) (Lactobacillus reuteri).